The primary structure comprises 29 residues: Kappa-theraphotoxin-Ps1a (29 aa).

Disulfide bonds link Cys2–Cys16, Cys9–Cys21, and Cys15–Cys25. Ile29 carries the post-translational modification Isoleucine amide.

It belongs to the neurotoxin 30 (phrixotoxin) family. As to expression, expressed by the venom gland.

The protein resides in the secreted. Its function is as follows. Potent and specific blocker of Kv4.2/KCND2 (IC(50)=5 nM) and Kv4.3/KCND3 (IC(50)=28 nM) potassium channels. Acts by altering the gating properties of these channels. Also shows moderate inhibition on human voltage-gated sodium channel Nav1.7/SCN9A activation (IC(50)=423 nM). This chain is Kappa-theraphotoxin-Ps1a, found in Paraphysa scrofa (Chilean copper tarantula).